The primary structure comprises 2670 residues: Inositol 1,4,5-trisphosphate-gated calcium channel ITPR3 (2670 aa).

Over Met1–Leu2233 the chain is Cytoplasmic. 5 MIR domains span residues Gly113–Asn173, Gly174–Phe224, Glu232–Val288, Gly295–Thr372, and Asp378–Val434. 1D-myo-inositol 1,4,5-trisphosphate contacts are provided by Arg266, Leu269, and Arg270. 1D-myo-inositol 1,4,5-trisphosphate is bound by residues Arg503, Lys507, Arg510, Tyr567, Arg568, and Lys569. Arg743 is a binding site for Ca(2+). Phosphoserine occurs at positions 916 and 934. Ca(2+) is bound by residues Glu1122 and Glu1125. Over residues Glu1138–Asp1153 the composition is skewed to basic and acidic residues. Disordered regions lie at residues Glu1138–Lys1164 and Asn1807–Met1835. Residues Ser1813, Ser1832, and Ser1834 each carry the phosphoserine modification. Ca(2+) contacts are provided by Glu1881 and Glu1945. 3 residues coordinate ATP: Ala1995, Glu2148, and Lys2151. The chain crosses the membrane as a helical span at residues Gly2234–Phe2254. Over Thr2255 to Pro2262 the chain is Extracellular. Residues Leu2263 to Ile2283 form a helical membrane-spanning segment. The Cytoplasmic segment spans residues Leu2284–Lys2292. Residues Ile2293–Tyr2310 traverse the membrane as a helical segment. At Lys2311–Gly2324 the chain is on the extracellular side. The helical transmembrane segment at Tyr2325–Phe2345 threads the bilayer. At Asp2346 to Ser2367 the chain is on the cytoplasmic side. Residues Ile2368–Leu2388 form a helical membrane-spanning segment. The Extracellular portion of the chain corresponds to Phe2389 to Tyr2495. The cysteines at positions 2454 and 2460 are disulfide-linked. The chain crosses the membrane as a helical span at residues Asp2496 to Ile2516. The Cytoplasmic portion of the chain corresponds to Asp2517 to Arg2670. ATP is bound by residues Cys2537 and Phe2538. Residue Cys2537 coordinates Zn(2+). Zn(2+) is bound by residues Cys2540 and His2557. Positions 2559, 2562, 2563, and 2564 each coordinate ATP. Zn(2+) is bound at residue His2562. Residue Thr2580 coordinates Ca(2+). 2 positions are modified to phosphoserine: Ser2608 and Ser2669.

Belongs to the InsP3 receptor family. Homodimer. Homotetramer. Interacts with TRPC1, TRPC3, TRPC4. Interacts with TRPV4. Interacts with SIGMAR1. Found in a complex with AKT1 and PML; this interaction modulates IP3R3-phosphorylation and in turn ITPR3-dependent calcium release. Interacts with IRAG2 (via coiled-coil domain). Interacts with CABP1. Interacts with TMBIM4/LFG4. Interacts with CEMIP. Interacts with TESPA1. Interacts with TMEM203. Interacts with BOK; regulates ITPR3 expression. Interacts with BCL2L10. Interacts with CHGA and CHGB. In terms of processing, phosphorylated by AKT1 on serine and/or threonine residues.

Its subcellular location is the endoplasmic reticulum membrane. It localises to the cytoplasmic vesicle. It is found in the secretory vesicle membrane. The catalysed reaction is Ca(2+)(in) = Ca(2+)(out). With respect to regulation, inositol 1,4,5-trisphosphate-gated calcium channel is regulated by cytosolic calcium in a biphasic manner. At low concentrations, cytosolic calcium binds at a high-affinity juxtamembrane domain (JD) calcium binding site, allowing ITPR3 to activate by escaping a low-energy resting state through an ensemble of preactivated states. At high cytosolic calcium concentrations, ITPR3 preferentially enters an inhibited state stabilized by calcium binding at a second, low-affinity cytoplasmic domain (CD) calcium binding site. Its function is as follows. Inositol 1,4,5-trisphosphate-gated calcium channel that, upon 1D-myo-inositol 1,4,5-trisphosphate binding, transports calcium from the endoplasmic reticulum lumen to cytoplasm, thus releasing the intracellular calcium and therefore participates in cellular calcium ion homeostasis. 1D-myo-inositol 1,4,5-trisphosphate binds to the ligand-free channel without altering its global conformation, yielding the low-energy resting state, then progresses through resting-to preactivated transitions to the higher energy preactivated state, which increases affinity for calcium, promoting binding of the low basal cytosolic calcium at the juxtamembrane domain (JD) site, favoring the transition through the ensemble of high-energy intermediate states along the trajectory to the fully-open activated state. Upon opening, releases calcium in the cytosol where it can bind to the low-affinity cytoplasmic domain (CD) site and stabilizes the inhibited state to terminate calcium release. This is Inositol 1,4,5-trisphosphate-gated calcium channel ITPR3 from Mus musculus (Mouse).